Reading from the N-terminus, the 601-residue chain is Glutathione-regulated potassium-efflux system protein KefB (601 aa).

A run of 13 helical transmembrane segments spans residues 4-24 (SDFLLAGVLFLFAAVAAVPLA), 29-49 (IGAVLGYLLAGIAIGPWGLGF), 55-75 (EILHFSELGVVFLMFIIGLEL), 87-107 (IFGVGAAQVLLSAALLAGLLM), 115-135 (AAVVGGIGLAMSSTAMALQLM), 152-172 (VLLFQDLAVIPALALVPLLAG), 177-197 (HFDWMKIGMKVLAFVGMLIGG), 207-227 (FIAASGVREVFTAATLLLVLG), 230-250 (LFMDALGLSMALGTFIAGVLL), 262-282 (AIDPFKGLLLGLFFISVGMSL), 284-304 (LGVLYIHLLWVVISVVVLVAV), 324-344 (MQFAGVLSQGGEFAFVLFSTA), and 356-376 (ALLLVTVTLSMMTTPLLMKLV). One can recognise an RCK N-terminal domain in the interval 400-519 (KPQVIVVGFG…AGVTQFSRET (120 aa)).

It belongs to the monovalent cation:proton antiporter 2 (CPA2) transporter (TC 2.A.37) family. KefB subfamily. As to quaternary structure, interacts with the regulatory subunit KefG.

It localises to the cell inner membrane. In terms of biological role, pore-forming subunit of a potassium efflux system that confers protection against electrophiles. Catalyzes K(+)/H(+) antiport. The protein is Glutathione-regulated potassium-efflux system protein KefB of Shigella boydii serotype 18 (strain CDC 3083-94 / BS512).